Here is a 597-residue protein sequence, read N- to C-terminus: DNA polymerase III subunit gamma/tau (597 aa).

44–51 contributes to the ATP binding site; that stretch reads GERGTGKT. Zn(2+) contacts are provided by cysteine 63, cysteine 72, cysteine 75, and cysteine 78.

Belongs to the DnaX/STICHEL family. In terms of assembly, DNA polymerase III contains a core (composed of alpha, epsilon and theta chains) that associates with a tau subunit. This core dimerizes to form the POLIII' complex. PolIII' associates with the gamma complex (composed of gamma, delta, delta', psi and chi chains) and with the beta chain to form the complete DNA polymerase III complex.

It catalyses the reaction DNA(n) + a 2'-deoxyribonucleoside 5'-triphosphate = DNA(n+1) + diphosphate. Its function is as follows. DNA polymerase III is a complex, multichain enzyme responsible for most of the replicative synthesis in bacteria. This DNA polymerase also exhibits 3' to 5' exonuclease activity. In Mycoplasma genitalium (strain ATCC 33530 / DSM 19775 / NCTC 10195 / G37) (Mycoplasmoides genitalium), this protein is DNA polymerase III subunit gamma/tau (dnaX).